The sequence spans 122 residues: Serum amyloid A-1 protein (122 aa).

An N-terminal signal peptide occupies residues 1-19 (MKLLTSLVFCSLLLGVCHG). Residues 20–45 (GFFSFVHEAFQGAGDMWRAYTDMKEA) are important for amyloid formation. Residues 91–108 (HEDTIADQEANRHGRSGK) show a composition bias toward basic and acidic residues. The disordered stretch occupies residues 91–122 (HEDTIADQEANRHGRSGKDPNYYRPPGLPDKY).

It belongs to the SAA family. Homohexamer; dimer of trimers. Can form amyloid fibrils after partial proteolysis; the native, undenatured protein does not form amyloid fibrils (in vitro). Apolipoprotein of the HDL complex. Binds to heparin. As to expression, detected in blood plasma (at protein level). Detected in liver.

It is found in the secreted. Functionally, major acute phase protein. The sequence is that of Serum amyloid A-1 protein (Saa1) from Mus musculus (Mouse).